We begin with the raw amino-acid sequence, 364 residues long: Probable transcription factor At4g00390 (364 aa).

The interval 1–149 is disordered; that stretch reads MTKKLDPPTA…STKRVKKDEE (149 aa). Over residues 13-32 the composition is skewed to acidic residues; that stretch reads SDEDDVETSEDDSSSSEEDE. The segment covering 39–80 has biased composition (low complexity); that stretch reads ATTAAAPAKSTAVSAATPAKSTSVSAAAPSKSTAVSAAADSD. Residues 81-93 show a composition bias toward acidic residues; it reads SGSESETDSDSES.

It belongs to the GeBP family.

This chain is Probable transcription factor At4g00390, found in Arabidopsis thaliana (Mouse-ear cress).